The primary structure comprises 275 residues: Pantothenate synthetase (275 aa).

An ATP-binding site is contributed by 26–33 (MGNLHDGH). His33 acts as the Proton donor in catalysis. Gln57 serves as a coordination point for (R)-pantoate. Position 57 (Gln57) interacts with beta-alanine. 144-147 (GKKD) is an ATP binding site. Gln150 is a (R)-pantoate binding site. ATP contacts are provided by residues Val173 and 181–184 (LSSR).

It belongs to the pantothenate synthetase family. As to quaternary structure, homodimer.

Its subcellular location is the cytoplasm. It catalyses the reaction (R)-pantoate + beta-alanine + ATP = (R)-pantothenate + AMP + diphosphate + H(+). It functions in the pathway cofactor biosynthesis; (R)-pantothenate biosynthesis; (R)-pantothenate from (R)-pantoate and beta-alanine: step 1/1. Functionally, catalyzes the condensation of pantoate with beta-alanine in an ATP-dependent reaction via a pantoyl-adenylate intermediate. The polypeptide is Pantothenate synthetase (Azoarcus sp. (strain BH72)).